We begin with the raw amino-acid sequence, 338 residues long: Formamidase (338 aa).

The 243-residue stretch at 15–257 (VVIGLAQLAL…DEIVCCELRP (243 aa)) folds into the CN hydrolase domain. Catalysis depends on Glu61, which acts as the Proton acceptor. The active-site Proton donor is the Lys130. Cys163 acts as the Nucleophile in catalysis.

It belongs to the carbon-nitrogen hydrolase superfamily. Aliphatic amidase family.

It carries out the reaction formamide + H2O = formate + NH4(+). Its function is as follows. Is an aliphatic amidase with a restricted substrate specificity, as it only hydrolyzes formamide. This chain is Formamidase, found in Pseudomonas syringae pv. syringae (strain B728a).